Reading from the N-terminus, the 562-residue chain is Carboxylesterase 1E (562 aa).

The first 19 residues, Met-1–Gly-19, serve as a signal peptide directing secretion. N-linked (GlcNAc...) asparagine glycosylation occurs at Asn-80. Cys-88 and Cys-117 form a disulfide bridge. The Acyl-ester intermediate role is filled by Ser-222. The cysteines at positions 274 and 285 are disulfide-linked. N-linked (GlcNAc...) asparagine glycosylation occurs at Asn-276. Catalysis depends on charge relay system residues Glu-354 and His-467. N-linked (GlcNAc...) asparagine glycosylation is present at Asn-490. The short motif at His-559–Leu-562 is the Prevents secretion from ER element.

The protein belongs to the type-B carboxylesterase/lipase family.

The protein localises to the endoplasmic reticulum lumen. The protein resides in the microsome membrane. The enzyme catalyses a carboxylic ester + H2O = an alcohol + a carboxylate + H(+). It catalyses the reaction all-trans-retinyl hexadecanoate + H2O = all-trans-retinol + hexadecanoate + H(+). Functionally, involved in the detoxification of xenobiotics and in the activation of ester and amide prodrugs. Hydrolyzes retinyl esters. The sequence is that of Carboxylesterase 1E from Mus musculus (Mouse).